The sequence spans 371 residues: Cathepsin L1 (371 aa).

Residues 1–48 (MNHLGVFETRFRPRTRHKSQRAQLIPEQITMRTAVLLPLLALLAVAQA) form the signal peptide. The propeptide at 49–153 (VSFADVVMEE…VTFISPAHVT (105 aa)) is activation peptide. Asn127 is a glycosylation site (N-linked (GlcNAc...) asparagine). Intrachain disulfides connect Cys175-Cys218, Cys209-Cys251, and Cys310-Cys360. Cys178 is an active-site residue. Residue His317 is part of the active site. Residues 327 to 329 (DES) constitute a propeptide that is removed on maturation. Residue Asn338 is part of the active site.

It belongs to the peptidase C1 family. Dimer of a heavy and a light chain linked by disulfide bonds. In the embryo, predominantly expressed in the midgut. Also expressed in larval alimentary organs such as salivary gland and midgut including gastric caeca.

It is found in the lysosome. It catalyses the reaction Specificity close to that of papain. As compared to cathepsin B, cathepsin L exhibits higher activity toward protein substrates, but has little activity on Z-Arg-Arg-NHMec, and no peptidyl-dipeptidase activity.. Its function is as follows. Important for the overall degradation of proteins in lysosomes. Essential for adult male and female fertility. May play a role in digestion. The sequence is that of Cathepsin L1 from Drosophila melanogaster (Fruit fly).